We begin with the raw amino-acid sequence, 362 residues long: UDP-N-acetylglucosamine--N-acetylmuramyl-(pentapeptide) pyrophosphoryl-undecaprenol N-acetylglucosamine transferase (362 aa).

UDP-N-acetyl-alpha-D-glucosamine contacts are provided by residues 14 to 16 (TGG), Arg170, Ser199, and Gln289.

This sequence belongs to the glycosyltransferase 28 family. MurG subfamily.

The protein resides in the cell inner membrane. It catalyses the reaction di-trans,octa-cis-undecaprenyl diphospho-N-acetyl-alpha-D-muramoyl-L-alanyl-D-glutamyl-meso-2,6-diaminopimeloyl-D-alanyl-D-alanine + UDP-N-acetyl-alpha-D-glucosamine = di-trans,octa-cis-undecaprenyl diphospho-[N-acetyl-alpha-D-glucosaminyl-(1-&gt;4)]-N-acetyl-alpha-D-muramoyl-L-alanyl-D-glutamyl-meso-2,6-diaminopimeloyl-D-alanyl-D-alanine + UDP + H(+). The protein operates within cell wall biogenesis; peptidoglycan biosynthesis. Cell wall formation. Catalyzes the transfer of a GlcNAc subunit on undecaprenyl-pyrophosphoryl-MurNAc-pentapeptide (lipid intermediate I) to form undecaprenyl-pyrophosphoryl-MurNAc-(pentapeptide)GlcNAc (lipid intermediate II). This Borrelia hermsii (strain HS1 / DAH) protein is UDP-N-acetylglucosamine--N-acetylmuramyl-(pentapeptide) pyrophosphoryl-undecaprenol N-acetylglucosamine transferase.